A 189-amino-acid polypeptide reads, in one-letter code: Glutathione-dependent formaldehyde-activating enzyme (189 aa).

The region spanning 20–167 (FAGGTLVCKC…LKELGLEPYD (148 aa)) is the CENP-V/GFA domain. Zn(2+) is bound by residues Cys27, Cys29, Cys48, Cys50, Cys53, Cys95, and Cys98.

The protein belongs to the Gfa family. Zn(2+) is required as a cofactor.

The catalysed reaction is S-(hydroxymethyl)glutathione = glutathione + formaldehyde. Its pathway is one-carbon metabolism; formaldehyde degradation; formate from formaldehyde (glutathione route): step 1/3. In terms of biological role, catalyzes the condensation of formaldehyde and glutathione to S-hydroxymethylglutathione. The polypeptide is Glutathione-dependent formaldehyde-activating enzyme (Rhodopseudomonas palustris (strain BisB18)).